We begin with the raw amino-acid sequence, 170 residues long: Photosystem II extrinsic protein V (170 aa).

The signal sequence occupies residues 1-33; the sequence is MASFFSTLRRSLNRLLIALPVLLGLMISTPAQA. Cys70, Cys73, His74, and His125 together coordinate heme c.

The protein belongs to the cytochrome c family. PsbV subfamily. As to quaternary structure, PSII is composed of 1 copy each of membrane proteins PsbA, PsbB, PsbC, PsbD, PsbE, PsbF, PsbH, PsbI, PsbJ, PsbK, PsbL, PsbM, PsbT, PsbX, PsbY, PsbZ, Psb30/Ycf12, peripheral proteins PsbO, CyanoQ (PsbQ), PsbU, PsbV and a large number of cofactors. It forms dimeric complexes. Requires heme c as cofactor.

The protein resides in the cellular thylakoid membrane. Functionally, one of the extrinsic, lumenal subunits of photosystem II (PSII). PSII is a light-driven water plastoquinone oxidoreductase, using light energy to abstract electrons from H(2)O, generating a proton gradient subsequently used for ATP formation. The extrinsic proteins stabilize the structure of photosystem II oxygen-evolving complex (OEC), the ion environment of oxygen evolution and protect the OEC against heat-induced inactivation. Low-potential cytochrome c that plays a role in the OEC of PSII. This chain is Photosystem II extrinsic protein V, found in Synechococcus sp. (strain CC9311).